The following is a 475-amino-acid chain: MSPQTETKASVGFKAGVKDYRLTYYTPEYETQDTDILAAFRVSPQPGVPPEEAGAAVAAESSTGTWTSVWTDGLTNLDRYKGRCYNIEPVAGEENQYICYVAYPLDLFEEGSVTNMFTSIVGNVFGFKALRALRLEDLRIPVAYVKTFQGPPHGIQVERDKLNKYGRPLLGCTIKPKLGLSAKNYGRACYECLRGGLDFTKDDENVNSQPFMRWRDRFLFCAEAIYKSQAETGEIKGHYLNATAGTCEEMIKRAVFARELGVPIVMHDYLTGGFTANTSLSQYCRDNGLLLHIHVAMHAVIDRQKNHGMHFRVLAKALRLSGGDHIHSGTVVGKLEGERDITLGFVDLLRDDYTEKDRCRGIFFTQSWVSTPGVLPVASGGIHVWHMPALTEIFGDDSVLQFGGGTLGHPWGNAPGAVANRVALEACVQARNEGRDLAREGNTIIREAAKWSPELAAACEVWKEIKFEFPAMDTI.

Positions 1 to 2 (MS) are excised as a propeptide. Pro-3 carries the N-acetylproline modification. Residue Lys-14 is modified to N6,N6,N6-trimethyllysine. Residues Asn-123 and Thr-173 each contribute to the substrate site. Lys-175 (proton acceptor) is an active-site residue. Position 177 (Lys-177) interacts with substrate. Mg(2+) is bound by residues Lys-201, Asp-203, and Glu-204. The residue at position 201 (Lys-201) is an N6-carboxylysine. His-294 (proton acceptor) is an active-site residue. 2 residues coordinate substrate: His-327 and Ser-379.

It belongs to the RuBisCO large chain family. Type I subfamily. Heterohexadecamer of 8 large chains and 8 small chains; disulfide-linked. The disulfide link is formed within the large subunit homodimers. The cofactor is Mg(2+). In terms of processing, the disulfide bond which can form in the large chain dimeric partners within the hexadecamer appears to be associated with oxidative stress and protein turnover.

The protein localises to the plastid. The protein resides in the chloroplast. The enzyme catalyses 2 (2R)-3-phosphoglycerate + 2 H(+) = D-ribulose 1,5-bisphosphate + CO2 + H2O. It catalyses the reaction D-ribulose 1,5-bisphosphate + O2 = 2-phosphoglycolate + (2R)-3-phosphoglycerate + 2 H(+). In terms of biological role, ruBisCO catalyzes two reactions: the carboxylation of D-ribulose 1,5-bisphosphate, the primary event in carbon dioxide fixation, as well as the oxidative fragmentation of the pentose substrate in the photorespiration process. Both reactions occur simultaneously and in competition at the same active site. The protein is Ribulose bisphosphate carboxylase large chain of Amaranthus hypochondriacus (Prince-of-Wales feather).